The sequence spans 425 residues: Synaptotagmin-4 (425 aa).

Residues M1–T16 are Vesicular-facing. Residues V17–C37 form a helical membrane-spanning segment. Topologically, residues C38 to G425 are cytoplasmic. Disordered regions lie at residues N102–V121 and F126–S147. A compositionally biased stretch (polar residues) spans F105–E119. S135 carries the post-translational modification Phosphoserine; by MAPK8. Residues E137–T146 show a composition bias toward low complexity. C2 domains follow at residues K153–T274 and G287–H420. Ca(2+) contacts are provided by D246, S249, and D252.

The protein belongs to the synaptotagmin family. In terms of assembly, interacts with KIF1A; the interaction increases in presence of calcium and decreases when SYT4 is phosphorylated at Ser-135. Requires Ca(2+) as cofactor. In terms of processing, phosphorylation at Ser-135 by MAPK8/JNK1 reduces interaction with KIF1A and neuronal dense core vesicles mobility. As to expression, widely expressed. Expressed in the brain. Expressed in pituitary gland, cerebellum, cortex, hypothalamus and hippocampus.

The protein resides in the cytoplasmic vesicle. The protein localises to the secretory vesicle. Its subcellular location is the neuronal dense core vesicle membrane. Its function is as follows. Synaptotagmin family member which does not bind Ca(2+). Involved in neuronal dense core vesicles (DCVs) mobility through its interaction with KIF1A. Upon increased neuronal activity, phosphorylation by MAPK8/JNK1 destabilizes the interaction with KIF1A and captures DCVs to synapses. Plays a role in dendrite formation by melanocytes. The sequence is that of Synaptotagmin-4 (Syt4) from Rattus norvegicus (Rat).